Reading from the N-terminus, the 300-residue chain is Flaviolin linalyltransferase (300 aa).

It belongs to the aromatic prenyltransferase family. As to quaternary structure, monomer.

It carries out the reaction flaviolin + (2E)-geranyl diphosphate = 3-linalylflaviolin + diphosphate. Does not require magnesium or any other divalent metal ions for activity. Involved in the biosynthesis of furanonaphthoquinone I (FNQ I). Catalyzes C- and O-prenylations of different phenolic substrates. With flaviolin as substrate, catalyzes the formation of a carbon-carbon-bond between C-3 (rather than C-1) of geranyl diphosphate and C-3 of flaviolin. With 1,3-dihydroxynaphthalene and 4-hydroxybenzoate as substrates, catalyzes O-prenylations. The polypeptide is Flaviolin linalyltransferase (Streptomyces virginiae (Streptomyces cinnamonensis)).